The primary structure comprises 507 residues: ATP synthase subunit alpha, chloroplastic (507 aa).

170 to 177 provides a ligand contact to ATP; the sequence is GDRQTGKT.

It belongs to the ATPase alpha/beta chains family. As to quaternary structure, F-type ATPases have 2 components, CF(1) - the catalytic core - and CF(0) - the membrane proton channel. CF(1) has five subunits: alpha(3), beta(3), gamma(1), delta(1), epsilon(1). CF(0) has four main subunits: a, b, b' and c.

The protein resides in the plastid. It localises to the chloroplast thylakoid membrane. It catalyses the reaction ATP + H2O + 4 H(+)(in) = ADP + phosphate + 5 H(+)(out). Functionally, produces ATP from ADP in the presence of a proton gradient across the membrane. The alpha chain is a regulatory subunit. The chain is ATP synthase subunit alpha, chloroplastic from Cucumis sativus (Cucumber).